The primary structure comprises 202 residues: Crossover junction endodeoxyribonuclease RuvC (202 aa).

Residues Asp-7, Glu-68, and Asp-141 contribute to the active site. 3 residues coordinate Mg(2+): Asp-7, Glu-68, and Asp-141.

This sequence belongs to the RuvC family. Homodimer which binds Holliday junction (HJ) DNA. The HJ becomes 2-fold symmetrical on binding to RuvC with unstacked arms; it has a different conformation from HJ DNA in complex with RuvA. In the full resolvosome a probable DNA-RuvA(4)-RuvB(12)-RuvC(2) complex forms which resolves the HJ. Requires Mg(2+) as cofactor.

The protein resides in the cytoplasm. It catalyses the reaction Endonucleolytic cleavage at a junction such as a reciprocal single-stranded crossover between two homologous DNA duplexes (Holliday junction).. The RuvA-RuvB-RuvC complex processes Holliday junction (HJ) DNA during genetic recombination and DNA repair. Endonuclease that resolves HJ intermediates. Cleaves cruciform DNA by making single-stranded nicks across the HJ at symmetrical positions within the homologous arms, yielding a 5'-phosphate and a 3'-hydroxyl group; requires a central core of homology in the junction. The consensus cleavage sequence is 5'-(A/T)TT(C/G)-3'. Cleavage occurs on the 3'-side of the TT dinucleotide at the point of strand exchange. HJ branch migration catalyzed by RuvA-RuvB allows RuvC to scan DNA until it finds its consensus sequence, where it cleaves and resolves the cruciform DNA. The protein is Crossover junction endodeoxyribonuclease RuvC of Clavibacter michiganensis subsp. michiganensis (strain NCPPB 382).